The primary structure comprises 175 residues: MSSQIRQNYSTEVEAAVNRLVNLYLRASYTYLSLGFYFDRDDVALEGVCHFFRELAEEKREGAERLLKMQNQRGGRALFQDLQKPSQDEWGTTLDAMKAAIVLEKSLNQALLDLHALGSAQADPHLCDFLESHFLDEEVKLIKKMGDHLTNIQRLVGSQAGLGEYLFERLTLKHD.

The residue at position 2 (Ser2) is an N-acetylserine. A Ferritin-like diiron domain is found at 7–156 (QNYSTEVEAA…DHLTNIQRLV (150 aa)). Fe cation contacts are provided by Glu54, Glu57, Glu58, Glu61, and Glu64. The tract at residues 54-61 (ELAEEKRE) is catalytic site for iron oxidation.

Belongs to the ferritin family. As to quaternary structure, oligomer of 24 subunits. There are two types of subunits: L (light) chain and H (heavy) chain. The major chain can be light or heavy, depending on the species and tissue type. The functional molecule forms a roughly spherical shell with a diameter of 12 nm and contains a central cavity into which the insoluble mineral iron core is deposited. Interacts with NCOA4.

Its subcellular location is the cytoplasmic vesicle. The protein localises to the autophagosome. It is found in the cytoplasm. It localises to the autolysosome. Its function is as follows. Stores iron in a soluble, non-toxic, readily available form. Important for iron homeostasis. Iron is taken up in the ferrous form and deposited as ferric hydroxides after oxidation. Also plays a role in delivery of iron to cells. Mediates iron uptake in capsule cells of the developing kidney. Delivery to lysosomes by the cargo receptor NCOA4 for autophagic degradation and release or iron. The sequence is that of Ferritin light chain (FTL) from Equus caballus (Horse).